Consider the following 237-residue polypeptide: Lectin alpha chain (237 aa).

The Mn(2+) site is built by glutamate 8 and aspartate 10. Positions 10, 12, 14, and 19 each coordinate Ca(2+). Position 12 (tyrosine 12) interacts with a carbohydrate. Residues aspartate 19 and histidine 24 each coordinate Mn(2+). 99 to 100 (LY) provides a ligand contact to a carbohydrate. Aspartate 208 lines the Ca(2+) pocket. A carbohydrate is bound at residue arginine 228.

Belongs to the leguminous lectin family. Equilibrium between homodimer and homotetramer. Oligomerization is pH-dependent with homotetramers forming at pH 6.5 and above. Post-translationally, the beta and gamma chains are produced by partial proteolytic processing of the lectin alpha chain by an asparaginyl endopeptidase. Mixture of 60% alpha lectin and 40% of its beta and gamma proteolytic fragments. In terms of tissue distribution, seed.

The protein localises to the vacuole. The protein resides in the aleurone grain. D-mannose/D-glucose-binding lectin. Has anti-inflammatory activity in rats. Induces histamine release in mast cells from hamster and rat. Induces lymphocyte proliferation and IFNG production. Shows toxicity against the aquatic snail B.glabrata at concentrations higher than 20 ug/ml. This is Lectin alpha chain from Dioclea virgata.